The chain runs to 186 residues: Nascent polypeptide-associated complex subunit beta (186 aa).

The 66-residue stretch at 65 to 130 (GADDKKLQTT…GEEKELTELV (66 aa)) folds into the NAC-A/B domain. The interval 153 to 186 (QNMQKQAGAEGKKDEDEDDIPDLVEGENFESNVE) is disordered. Acidic residues predominate over residues 167–186 (EDEDDIPDLVEGENFESNVE).

Belongs to the NAC-beta family. Part of the nascent polypeptide-associated complex (NAC), consisting of egd2 and egd1. NAC associates with ribosomes via egd1.

The protein localises to the cytoplasm. It is found in the nucleus. Functionally, component of the nascent polypeptide-associated complex (NAC), a dynamic component of the ribosomal exit tunnel, protecting the emerging polypeptides from interaction with other cytoplasmic proteins to ensure appropriate nascent protein targeting. The NAC complex also promotes mitochondrial protein import by enhancing productive ribosome interactions with the outer mitochondrial membrane and blocks the inappropriate interaction of ribosomes translating non-secretory nascent polypeptides with translocation sites in the membrane of the endoplasmic reticulum. EGD1 may act as a transcription factor that exert a negative effect on the expression of several genes that are transcribed by RNA polymerase II. This Aspergillus fumigatus (strain ATCC MYA-4609 / CBS 101355 / FGSC A1100 / Af293) (Neosartorya fumigata) protein is Nascent polypeptide-associated complex subunit beta (egd1).